The chain runs to 68 residues: Cytotoxic linear peptide (68 aa).

An N-terminal signal peptide occupies residues 1–23; the sequence is MKTQFAILLIALVLFQMFSQSEA. Leu-36 carries the post-translational modification Leucine amide. The propeptide occupies 40-68; that stretch reads GLNELDDLDELFDGEISQADIDFLKELMS.

This sequence belongs to the non-disulfide-bridged peptide (NDBP) superfamily. Short antimicrobial peptide (group 4) family. As to expression, expressed by the venom gland.

The protein resides in the secreted. Its subcellular location is the target cell membrane. Functionally, amphipathic peptide that has antibacterial activities. This Pandinus cavimanus (Tanzanian red clawed scorpion) protein is Cytotoxic linear peptide.